Consider the following 433-residue polypeptide: GPI mannosyltransferase 2 (433 aa).

Residue Met-1 is a topological domain, cytoplasmic. The chain crosses the membrane as a helical span at residues 2–22; that stretch reads IVGLTLYFVLFRSIQYLLVFL. Topologically, residues 23–109 are lumenal; that stretch reads TPIRQFDTST…NNDSIYHALR (87 aa). N-linked (GlcNAc...) asparagine glycans are attached at residues Asn-69 and Asn-101. A helical transmembrane segment spans residues 110–130; it reads VGVAIENVLFYLSGIVLYFLT. Residues 131–161 are Cytoplasmic-facing; the sequence is KKIFSQNIRQSQFARTIAKKTSLLFFLTSAA. The chain crosses the membrane as a helical span at residues 162–182; it reads GFLTSIYSEPLSFFFAFVGIW. At 183 to 215 the chain is on the lumenal side; the sequence is SRECSISVPVLGQFDISWRYWFPYSFISMACFT. The chain crosses the membrane as a helical span at residues 216–236; the sequence is LASLNRSNCVLLGIYFIFDLI. Residues 237 to 243 lie on the Cytoplasmic side of the membrane; that stretch reads ELTKNRK. Residues 244 to 264 traverse the membrane as a helical segment; it reads FVKAICFPLLSGSLMFSALLY. Residues 265-318 are Lumenal-facing; the sequence is QQYYLPYKTFCPQRGEWCKSQLFSSIFITKTSLYSYIQSHYWGVGLLKYWTPNN. Residues 319–339 traverse the membrane as a helical segment; sequence IPNFLFAVPNIIILIYSSIYF. Residues 340–350 are Cytoplasmic-facing; sequence SKIYPSYNLKA. The helical transmembrane segment at 351-371 threads the bilayer; that stretch reads LVWITRALVVIVCFFAHVQIL. At 372–409 the chain is on the lumenal side; that stretch reads NRIASFLPLHLWYLADRLVKTSDPKKMENPKGDDKIVK. Residues 410-430 form a helical membrane-spanning segment; that stretch reads FYIYWLAFWIPLQTILFAAFL. Residues 431–433 are Cytoplasmic-facing; that stretch reads PPA.

It belongs to the PIGV family. Part of the GPI mannosyltransferase 2 complex composed of GPI18 and PGA1.

It localises to the endoplasmic reticulum membrane. It participates in glycolipid biosynthesis; glycosylphosphatidylinositol-anchor biosynthesis. Functionally, mannosyltransferase involved in glycosylphosphatidylinositol-anchor biosynthesis. Responsible for the transfer of the second mannose to the glycosylphosphatidylinositol during GPI precursor assembly. This chain is GPI mannosyltransferase 2 (GPI18), found in Saccharomyces cerevisiae (strain ATCC 204508 / S288c) (Baker's yeast).